A 491-amino-acid polypeptide reads, in one-letter code: Glutamyl-tRNA(Gln) amidotransferase subunit A (491 aa).

Catalysis depends on charge relay system residues Lys77 and Ser152. The active-site Acyl-ester intermediate is Ser176.

The protein belongs to the amidase family. GatA subfamily. Heterotrimer of A, B and C subunits.

The catalysed reaction is L-glutamyl-tRNA(Gln) + L-glutamine + ATP + H2O = L-glutaminyl-tRNA(Gln) + L-glutamate + ADP + phosphate + H(+). In terms of biological role, allows the formation of correctly charged Gln-tRNA(Gln) through the transamidation of misacylated Glu-tRNA(Gln) in organisms which lack glutaminyl-tRNA synthetase. The reaction takes place in the presence of glutamine and ATP through an activated gamma-phospho-Glu-tRNA(Gln). This chain is Glutamyl-tRNA(Gln) amidotransferase subunit A, found in Chlamydia trachomatis serovar A (strain ATCC VR-571B / DSM 19440 / HAR-13).